Here is a 114-residue protein sequence, read N- to C-terminus: T cell receptor beta variable 6-9 (114 aa).

An N-terminal signal peptide occupies residues 1–21 (MSIGLLCCVAFSLLWAGPVNA). The 93-residue stretch at 22 to 114 (GVTQTPKFHI…TSVYFCASSY (93 aa)) folds into the Ig-like domain. A disulfide bridge connects residues Cys-42 and Cys-110. Asn-84 is a glycosylation site (N-linked (GlcNAc...) asparagine).

In terms of assembly, alpha-beta TR is a heterodimer composed of an alpha and beta chain; disulfide-linked. The alpha-beta TR is associated with the transmembrane signaling CD3 coreceptor proteins to form the TR-CD3 (TcR or TCR). The assembly of alpha-beta TR heterodimers with CD3 occurs in the endoplasmic reticulum where a single alpha-beta TR heterodimer associates with one CD3D-CD3E heterodimer, one CD3G-CD3E heterodimer and one CD247 homodimer forming a stable octameric structure. CD3D-CD3E and CD3G-CD3E heterodimers preferentially associate with TR alpha and TR beta chains, respectively. The association of the CD247 homodimer is the last step of TcR assembly in the endoplasmic reticulum and is required for transport to the cell surface.

Its subcellular location is the cell membrane. V region of the variable domain of T cell receptor (TR) beta chain that participates in the antigen recognition. Alpha-beta T cell receptors are antigen specific receptors which are essential to the immune response and are present on the cell surface of T lymphocytes. Recognize peptide-major histocompatibility (MH) (pMH) complexes that are displayed by antigen presenting cells (APC), a prerequisite for efficient T cell adaptive immunity against pathogens. Binding of alpha-beta TR to pMH complex initiates TR-CD3 clustering on the cell surface and intracellular activation of LCK that phosphorylates the ITAM motifs of CD3G, CD3D, CD3E and CD247 enabling the recruitment of ZAP70. In turn ZAP70 phosphorylates LAT, which recruits numerous signaling molecules to form the LAT signalosome. The LAT signalosome propagates signal branching to three major signaling pathways, the calcium, the mitogen-activated protein kinase (MAPK) kinase and the nuclear factor NF-kappa-B (NF-kB) pathways, leading to the mobilization of transcription factors that are critical for gene expression and essential for T cell growth and differentiation. The T cell repertoire is generated in the thymus, by V-(D)-J rearrangement. This repertoire is then shaped by intrathymic selection events to generate a peripheral T cell pool of self-MH restricted, non-autoaggressive T cells. Post-thymic interaction of alpha-beta TR with the pMH complexes shapes TR structural and functional avidity. The polypeptide is T cell receptor beta variable 6-9 (Homo sapiens (Human)).